The sequence spans 145 residues: uncharacterized protein (145 aa).

The tract at residues 62 to 145 (LPSVGGRMTA…QLPQQGGCPG (84 aa)) is disordered. The span at 84 to 95 (ASSPEDPPLPHP) shows a compositional bias: pro residues.

This is an uncharacterized protein from Homo sapiens (Human).